The primary structure comprises 360 residues: Holliday junction branch migration complex subunit RuvB (360 aa).

Positions 1 to 23 (MIASVGDSRYYPKSVANGEKSDQ) are disordered. The large ATPase domain (RuvB-L) stretch occupies residues 12 to 204 (PKSVANGEKS…FGIVLRLEFY (193 aa)). ATP-binding positions include Leu43, Arg44, Gly85, Lys88, Thr89, Thr90, 151–153 (EDY), Arg194, Tyr204, and Arg241. Thr89 contributes to the Mg(2+) binding site. Residues 205–275 (TTEDLKIILK…TAQKALEMLE (71 aa)) are small ATPAse domain (RuvB-S). Residues 278–360 (QHGFDEVDRR…KPPKKQDSLF (83 aa)) form a head domain (RuvB-H) region. Positions 333 and 338 each coordinate DNA.

This sequence belongs to the RuvB family. In terms of assembly, homohexamer. Forms an RuvA(8)-RuvB(12)-Holliday junction (HJ) complex. HJ DNA is sandwiched between 2 RuvA tetramers; dsDNA enters through RuvA and exits via RuvB. An RuvB hexamer assembles on each DNA strand where it exits the tetramer. Each RuvB hexamer is contacted by two RuvA subunits (via domain III) on 2 adjacent RuvB subunits; this complex drives branch migration. In the full resolvosome a probable DNA-RuvA(4)-RuvB(12)-RuvC(2) complex forms which resolves the HJ.

The protein resides in the cytoplasm. It catalyses the reaction ATP + H2O = ADP + phosphate + H(+). In terms of biological role, the RuvA-RuvB-RuvC complex processes Holliday junction (HJ) DNA during genetic recombination and DNA repair, while the RuvA-RuvB complex plays an important role in the rescue of blocked DNA replication forks via replication fork reversal (RFR). RuvA specifically binds to HJ cruciform DNA, conferring on it an open structure. The RuvB hexamer acts as an ATP-dependent pump, pulling dsDNA into and through the RuvAB complex. RuvB forms 2 homohexamers on either side of HJ DNA bound by 1 or 2 RuvA tetramers; 4 subunits per hexamer contact DNA at a time. Coordinated motions by a converter formed by DNA-disengaged RuvB subunits stimulates ATP hydrolysis and nucleotide exchange. Immobilization of the converter enables RuvB to convert the ATP-contained energy into a lever motion, pulling 2 nucleotides of DNA out of the RuvA tetramer per ATP hydrolyzed, thus driving DNA branch migration. The RuvB motors rotate together with the DNA substrate, which together with the progressing nucleotide cycle form the mechanistic basis for DNA recombination by continuous HJ branch migration. Branch migration allows RuvC to scan DNA until it finds its consensus sequence, where it cleaves and resolves cruciform DNA. The sequence is that of Holliday junction branch migration complex subunit RuvB from Koribacter versatilis (strain Ellin345).